Here is a 467-residue protein sequence, read N- to C-terminus: Fumarate hydratase class II (467 aa).

Substrate is bound by residues 99–101 (SGT), 130–133 (HPND), 140–142 (SSN), and Thr188. His189 (proton donor/acceptor) is an active-site residue. Ser319 is a catalytic residue. Residues Ser320 and 325-327 (KVN) each bind substrate.

This sequence belongs to the class-II fumarase/aspartase family. Fumarase subfamily. In terms of assembly, homotetramer.

The protein resides in the cytoplasm. It carries out the reaction (S)-malate = fumarate + H2O. Its pathway is carbohydrate metabolism; tricarboxylic acid cycle; (S)-malate from fumarate: step 1/1. Functionally, involved in the TCA cycle. Catalyzes the stereospecific interconversion of fumarate to L-malate. The polypeptide is Fumarate hydratase class II (Thermosynechococcus vestitus (strain NIES-2133 / IAM M-273 / BP-1)).